Here is a 198-residue protein sequence, read N- to C-terminus: Nucleoid occlusion factor SlmA (198 aa).

Positions Asn10–Leu70 constitute an HTH tetR-type domain. Positions Thr33 to Phe52 form a DNA-binding region, H-T-H motif. Residues Glu117–Arg144 adopt a coiled-coil conformation.

This sequence belongs to the nucleoid occlusion factor SlmA family. As to quaternary structure, homodimer. Interacts with FtsZ.

Its subcellular location is the cytoplasm. The protein localises to the nucleoid. Required for nucleoid occlusion (NO) phenomenon, which prevents Z-ring formation and cell division over the nucleoid. Acts as a DNA-associated cell division inhibitor that binds simultaneously chromosomal DNA and FtsZ, and disrupts the assembly of FtsZ polymers. SlmA-DNA-binding sequences (SBS) are dispersed on non-Ter regions of the chromosome, preventing FtsZ polymerization at these regions. The protein is Nucleoid occlusion factor SlmA of Salmonella typhi.